The primary structure comprises 337 residues: uncharacterized protein (337 aa).

ATP is bound at residue 29 to 36; that stretch reads GPKSSGKS.

The protein belongs to the archaeal ATPase family.

This is an uncharacterized protein from Methanocaldococcus jannaschii (strain ATCC 43067 / DSM 2661 / JAL-1 / JCM 10045 / NBRC 100440) (Methanococcus jannaschii).